A 489-amino-acid polypeptide reads, in one-letter code: Probable transporter MCH1 (489 aa).

The next 3 helical transmembrane spans lie at 30 to 50 (IAYI…LISL), 68 to 88 (MIVT…GIIA), and 92 to 112 (GPIT…AYLA). N-linked (GlcNAc...) asparagine glycosylation occurs at Asn-123. The next 8 helical transmembrane spans lie at 132-152 (TLVC…SALI), 163-183 (LLSI…GSQF), 202-222 (VFKA…IATS), 279-299 (VLYI…MFIA), 307-327 (VLAG…YALT), 351-371 (WILL…YMLS), 388-408 (FYIG…YPTI), and 421-441 (AYGT…LIYA). An N-linked (GlcNAc...) asparagine glycan is attached at Asn-450. The helical transmembrane segment at 462–482 (ETTALEFCAAILLTVVVTVLW) threads the bilayer.

This sequence belongs to the major facilitator superfamily.

It is found in the vacuole membrane. Functionally, probable transporter. The polypeptide is Probable transporter MCH1 (MCH1) (Candida glabrata (strain ATCC 2001 / BCRC 20586 / JCM 3761 / NBRC 0622 / NRRL Y-65 / CBS 138) (Yeast)).